Reading from the N-terminus, the 619-residue chain is Hypermethylated in cancer 2 protein (619 aa).

The region spanning 46 to 109 is the BTB domain; that stretch reads CDVIIMVENS…IYTGKLLPSD (64 aa). A phosphoserine mark is found at Ser166, Ser169, and Ser197. Disordered stretches follow at residues 180-293 and 307-426; these read DVRK…VGNS and MDVE…GHTG. Gly residues predominate over residues 214–228; sequence LGLGGPAGGEMGLGG. The interval 247–249 is binding to CtBP; it reads DLS. Residues 281–293 show a composition bias toward polar residues; sequence APTSTSALPVGNS. The segment covering 337 to 357 has biased composition (basic and acidic residues); it reads KKDWNKKEPVAGSPFDRRETG. 2 positions are modified to phosphoserine: Ser349 and Ser416. 5 consecutive C2H2-type zinc fingers follow at residues 446–468, 509–531, 537–559, 565–587, and 593–615; these read YVCI…VETH, FKCS…EKTH, FPCN…MRSH, FACD…MRVH, and YECQ…LRMH.

It belongs to the krueppel C2H2-type zinc-finger protein family. Hic subfamily. As to quaternary structure, self-associates. Interacts with HIC1.

The protein localises to the nucleus. Transcriptional repressor. The chain is Hypermethylated in cancer 2 protein (Hic2) from Mus musculus (Mouse).